The sequence spans 270 residues: tRNA pseudouridine synthase A (270 aa).

The active-site Nucleophile is Asp60. The tract at residues Phe107 to Phe111 is RNA binding. Tyr118 is a binding site for substrate. The interval Gln168–Arg172 is interaction with tRNA.

This sequence belongs to the tRNA pseudouridine synthase TruA family. In terms of assembly, homodimer.

It carries out the reaction uridine(38/39/40) in tRNA = pseudouridine(38/39/40) in tRNA. Functionally, formation of pseudouridine at positions 38, 39 and 40 in the anticodon stem and loop of transfer RNAs. In Klebsiella pneumoniae (strain 342), this protein is tRNA pseudouridine synthase A.